A 169-amino-acid polypeptide reads, in one-letter code: Small ribosomal subunit protein bS16 (169 aa).

The interval alanine 114 to glutamate 169 is disordered. Basic and acidic residues predominate over residues alanine 129 to alanine 156. Residues alanine 159–glutamate 169 are compositionally biased toward acidic residues.

The protein belongs to the bacterial ribosomal protein bS16 family.

This chain is Small ribosomal subunit protein bS16, found in Corynebacterium urealyticum (strain ATCC 43042 / DSM 7109).